Reading from the N-terminus, the 143-residue chain is Large-conductance mechanosensitive channel (143 aa).

3 helical membrane-spanning segments follow: residues 16–36 (VMDL…TNSL), 40–60 (IIMP…NMFI), and 87–107 (GSFI…FMMV).

This sequence belongs to the MscL family. As to quaternary structure, homopentamer.

It localises to the cell inner membrane. Functionally, channel that opens in response to stretch forces in the membrane lipid bilayer. May participate in the regulation of osmotic pressure changes within the cell. In Psychrobacter sp. (strain PRwf-1), this protein is Large-conductance mechanosensitive channel.